A 249-amino-acid polypeptide reads, in one-letter code: Small ribosomal subunit protein eS6 (249 aa).

Lys-14 is covalently cross-linked (Glycyl lysine isopeptide (Lys-Gly) (interchain with G-Cter in SUMO2)). Residue Glu-35 is modified to ADP-ribosyl glutamic acid. The residue at position 137 (Arg-137) is a (3R)-3-hydroxyarginine. Position 148 is a phosphoserine (Ser-148). Lys-211 carries the N6-acetyllysine modification. The segment covering 217 to 229 (MKEAKEKRQEQIA) has biased composition (basic and acidic residues). Residues 217 to 249 (MKEAKEKRQEQIAKRRRLSSLRASTSKSESSQK) are disordered. Phosphoserine is present on residues Ser-235, Ser-236, Ser-240, Ser-242, Ser-244, and Ser-247. The segment covering 236–249 (SLRASTSKSESSQK) has biased composition (low complexity).

This sequence belongs to the eukaryotic ribosomal protein eS6 family. Component of the small ribosomal subunit. Part of the small subunit (SSU) processome, composed of more than 70 proteins and the RNA chaperone small nucleolar RNA (snoRNA) U3. Post-translationally, ribosomal protein S6 is the major substrate of protein kinases in eukaryote ribosomes. The phosphorylation is stimulated by growth factors, tumor promoting agents, and mitogens. It is dephosphorylated at growth arrest. Phosphorylated at Ser-235 and Ser-236 by RPS6KA1 and RPS6KA3; phosphorylation at these sites facilitates the assembly of the pre-initiation complex. In terms of processing, specifically hydroxylated (with R stereochemistry) at C-3 of Arg-137 by KDM8. Mono-ADP-ribosylation at Glu-35 by PARP16 inhibits polysome assembly and mRNA loading, thereby inhibiting protein translation.

It is found in the cytoplasm. The protein localises to the nucleus. It localises to the nucleolus. Its function is as follows. Component of the 40S small ribosomal subunit. Plays an important role in controlling cell growth and proliferation through the selective translation of particular classes of mRNA. Part of the small subunit (SSU) processome, first precursor of the small eukaryotic ribosomal subunit. During the assembly of the SSU processome in the nucleolus, many ribosome biogenesis factors, an RNA chaperone and ribosomal proteins associate with the nascent pre-rRNA and work in concert to generate RNA folding, modifications, rearrangements and cleavage as well as targeted degradation of pre-ribosomal RNA by the RNA exosome. This is Small ribosomal subunit protein eS6 (RPS6) from Oryctolagus cuniculus (Rabbit).